Here is a 335-residue protein sequence, read N- to C-terminus: Ferrochelatase (335 aa).

Residues His207 and Glu288 each contribute to the Fe cation site.

It belongs to the ferrochelatase family.

Its subcellular location is the cytoplasm. It carries out the reaction heme b + 2 H(+) = protoporphyrin IX + Fe(2+). The protein operates within porphyrin-containing compound metabolism; protoheme biosynthesis; protoheme from protoporphyrin-IX: step 1/1. Catalyzes the ferrous insertion into protoporphyrin IX. In Helicobacter pylori (strain G27), this protein is Ferrochelatase.